Consider the following 130-residue polypeptide: Small ribosomal subunit protein uS9 (130 aa).

It belongs to the universal ribosomal protein uS9 family.

This chain is Small ribosomal subunit protein uS9, found in Brevibacillus brevis (strain 47 / JCM 6285 / NBRC 100599).